The primary structure comprises 255 residues: Ciliogenesis and planar polarity effector 2 (255 aa).

Positions 52-255 (PADIASYKLF…VIAGLVGGAD (204 aa)) are small GTPase-like. GTP is bound by residues 64 to 71 (GRSGAGKT) and 177 to 180 (TKLD).

This sequence belongs to the small GTPase superfamily. Rab family.

The protein localises to the cytoplasm. It is found in the cytoskeleton. The protein resides in the cilium basal body. Functionally, potential effector of the planar cell polarity signaling pathway. Plays a role in targeted membrane trafficking most probably at the level of vesicle fusion with membranes. Involved in cilium biogenesis by regulating the transport of cargo proteins to the basal body and to the apical tips of cilia. More generally involved in exocytosis in secretory cells. The chain is Ciliogenesis and planar polarity effector 2 (cplane2) from Xenopus tropicalis (Western clawed frog).